A 258-amino-acid chain; its full sequence is Undecaprenyl-diphosphatase (258 aa).

Transmembrane regions (helical) follow at residues 14-34 (AAGE…PWLL), 39-59 (QGLT…LIYF), 79-99 (GKIL…GVLF), 106-126 (VFRS…ILHL), 136-156 (VALN…ALMP), 176-196 (AESA…AAVL), 209-229 (AFIA…KFLM), and 237-257 (FNIF…TALM).

The protein belongs to the UppP family.

It localises to the cell membrane. The enzyme catalyses di-trans,octa-cis-undecaprenyl diphosphate + H2O = di-trans,octa-cis-undecaprenyl phosphate + phosphate + H(+). Its function is as follows. Catalyzes the dephosphorylation of undecaprenyl diphosphate (UPP). Confers resistance to bacitracin. This Elusimicrobium minutum (strain Pei191) protein is Undecaprenyl-diphosphatase.